The sequence spans 106 residues: Small ribosomal subunit protein uS10 (106 aa).

Belongs to the universal ribosomal protein uS10 family. Part of the 30S ribosomal subunit.

In terms of biological role, involved in the binding of tRNA to the ribosomes. This Hyphomonas neptunium (strain ATCC 15444) protein is Small ribosomal subunit protein uS10.